We begin with the raw amino-acid sequence, 271 residues long: Zinc-finger homeodomain protein 8 (271 aa).

Position 16 is a phosphoserine (Ser-16). Residues 56–107 (YKECLKNHAAGIGGHALDGCGEFMPSPSFNSNDPASLTCAACGCHRNFHRRE) form a ZF-HD dimerization-type; degenerate zinc finger. The interval 125-154 (HNRHQLPPPPPPHLAGIRSPDDDDSASPPP) is disordered. Residues 179–242 (RKRFRTKFSQ…NNKISGRSGA (64 aa)) constitute a DNA-binding region (homeobox).

In terms of assembly, homo- and heterodimer with other ZFHD proteins. Interacts with MIF1, MIF2 and MIF3; these interactions prevent nuclear localization and DNA-binding to inhibit transcription regulation activity. Binds to ZHD1, ZHD2, ZHD4, ZHD10 and ZHD11. Interacts with HIPP30. Mostly expressed in flowers and inflorescence.

It is found in the nucleus. Its function is as follows. Putative transcription factor. This chain is Zinc-finger homeodomain protein 8 (ZHD8), found in Arabidopsis thaliana (Mouse-ear cress).